Consider the following 99-residue polypeptide: NADH-quinone oxidoreductase subunit K (99 aa).

The next 3 membrane-spanning stretches (helical) occupy residues 3–23 (PANY…GVLL), 28–48 (IVMF…FVTF), and 59–79 (MIAF…LAII).

Belongs to the complex I subunit 4L family. In terms of assembly, NDH-1 is composed of 14 different subunits. Subunits NuoA, H, J, K, L, M, N constitute the membrane sector of the complex.

Its subcellular location is the cell membrane. The enzyme catalyses a quinone + NADH + 5 H(+)(in) = a quinol + NAD(+) + 4 H(+)(out). Functionally, NDH-1 shuttles electrons from NADH, via FMN and iron-sulfur (Fe-S) centers, to quinones in the respiratory chain. The immediate electron acceptor for the enzyme in this species is believed to be a menaquinone. Couples the redox reaction to proton translocation (for every two electrons transferred, four hydrogen ions are translocated across the cytoplasmic membrane), and thus conserves the redox energy in a proton gradient. The protein is NADH-quinone oxidoreductase subunit K of Mycobacterium marinum (strain ATCC BAA-535 / M).